The primary structure comprises 290 residues: Ribosomal RNA small subunit methyltransferase A (290 aa).

Residues N27, L29, G54, E75, D100, and N125 each coordinate S-adenosyl-L-methionine.

It belongs to the class I-like SAM-binding methyltransferase superfamily. rRNA adenine N(6)-methyltransferase family. RsmA subfamily.

It localises to the cytoplasm. The catalysed reaction is adenosine(1518)/adenosine(1519) in 16S rRNA + 4 S-adenosyl-L-methionine = N(6)-dimethyladenosine(1518)/N(6)-dimethyladenosine(1519) in 16S rRNA + 4 S-adenosyl-L-homocysteine + 4 H(+). Functionally, specifically dimethylates two adjacent adenosines (A1518 and A1519) in the loop of a conserved hairpin near the 3'-end of 16S rRNA in the 30S particle. May play a critical role in biogenesis of 30S subunits. The sequence is that of Ribosomal RNA small subunit methyltransferase A from Streptococcus pneumoniae (strain JJA).